Reading from the N-terminus, the 405-residue chain is MGFGKKKVSYFYDEDVGNYHYGPQHPMKPHRVRMVHNLVVNYNLYEKLNVITPVRATRNDMTRCHTDEYIEFLWRVTPDTMEKFQPHQLKFNVGDDCPVFDGLYEFCSISAGGSIGAAQELNSGNAEIAINWAGGLHHAKKREASGFCYVNDIALAALELLKYHQRVLYIDIDVHHGDGVEEFFYTTDRVMTCSFHKFGEYFPGTGHIKDTGIGTGKNYAVNVPLRDGIDDESYESVFKPVISHIMQWFRPEAVILQCGTDSLAGDRLGCFNLSMKGHSMCVDFVKSFNLPMICVGGGGYTVRNVARVWTYETGLLAGEELDENLPYNDYLQYYGPDYKLNVLSNNMENHNTRQYLDSITSEIIENLRNLSFAPSVQMHKTPGDFTFENAEKQNIAKEEIMDERV.

A histone deacetylase region spans residues 6 to 318 (KKVSYFYDED…WTYETGLLAG (313 aa)). Histidine 138 is an active-site residue.

Belongs to the histone deacetylase family. HD type 1 subfamily. As to quaternary structure, heterotetramer of alp13, clr6, prw1 and pst2.

The protein resides in the nucleus. The catalysed reaction is N(6)-acetyl-L-lysyl-[histone] + H2O = L-lysyl-[histone] + acetate. In terms of biological role, responsible for the deacetylation of lysine residues on the N-terminal part of the core histones (H2A, H2B, H3 and H4). Histone deacetylation gives a tag for epigenetic repression and plays an important role in transcriptional regulation, cell cycle progression and developmental events. Histone deacetylases act via the formation of large multiprotein complexes. Has a role in chromatin assembly and chromosome segregation. The sequence is that of Histone deacetylase clr6 (clr6) from Schizosaccharomyces pombe (strain 972 / ATCC 24843) (Fission yeast).